The sequence spans 273 residues: Phosphatidylglycerol--prolipoprotein diacylglyceryl transferase (273 aa).

Helical transmembrane passes span 19-39 (VHWY…LASY), 55-75 (LVFY…VLFY), 90-110 (VWTG…AMIL), 125-145 (FIAP…FIGA), 174-194 (PSQI…LWWF), 202-222 (MAVS…VEFF), and 230-250 (GFIL…MLLI). R138 provides a ligand contact to a 1,2-diacyl-sn-glycero-3-phospho-(1'-sn-glycerol).

It belongs to the Lgt family.

Its subcellular location is the cell inner membrane. It carries out the reaction L-cysteinyl-[prolipoprotein] + a 1,2-diacyl-sn-glycero-3-phospho-(1'-sn-glycerol) = an S-1,2-diacyl-sn-glyceryl-L-cysteinyl-[prolipoprotein] + sn-glycerol 1-phosphate + H(+). Its pathway is protein modification; lipoprotein biosynthesis (diacylglyceryl transfer). Its function is as follows. Catalyzes the transfer of the diacylglyceryl group from phosphatidylglycerol to the sulfhydryl group of the N-terminal cysteine of a prolipoprotein, the first step in the formation of mature lipoproteins. This Acinetobacter baylyi (strain ATCC 33305 / BD413 / ADP1) protein is Phosphatidylglycerol--prolipoprotein diacylglyceryl transferase.